The following is an 885-amino-acid chain: MAPGEQQLSLVPDDTIQGSLFAPEPSEDKTEESERPKQRRSHPGRRTAPAAQHNEDSSNNDDEGLPRWHHHGLVDPLALTPMLRHYVELKAAHPERVLLYRLGDFFECFFEDALLTSRLLELTLTGKEGGKSIGRVPMAGIPHHAAERYCSELVRRGHAVALCDQLETTAAKGALLKRDITRVLTPGTVLEEGMLAARRNNWLAAVVLDDEQRWGLAVADVSTGELLLHERQGTTELQQQLLQLEAAELLLPGIEAAEWCPDGLGLTQQPRTPFEAASADRALKQRFGVRNLEGLGLADHPLARRAAGGLIAYLDASQPGSTVPLERPQLVFAGDALVLDHQTRRNLELTATQRDGQFQGSLLWAIDRSHTAMGGRALRRWLEAPLLDATAIRGRQEAITELVEQRPLRLSVRRLLRPMADLERLAGRCGAGRASARDLVALADGLERLPLLADLLKSSSAAPLADLQQPRPDLQQLAELLRFQLVDQPPMSLSEGGLIHDGVDEDLDDLRNRLDEQENWLAGVEKRERKASSNPNLRLQFHRSFGYFLAVSRAKATAVPDHWIRRQTLSNEERFVTPELKEREGRILQLKARSHQREYDLFCRLRDQVGEQATAIRDAARAVASLDALAGLAELAATQGYCRPELTDGRCLEIEGGRHPVVEQLLSESAFVPNSVALGHGDKPDLVVLTGPNASGKSCYLRQCGVLQLMAQMGSWIPAERAAIALADRIFTRVGAVDDLASGQSTFMVEMAETANILQHASERSLVLLDEIGRGTATFDGLSIAWAVAEHLASAPPHGLGARSIFATHYHELNALAGSHSNVANFQVVVEEQDAELVFLHKVMPGGADRSYGIEAARLAGVPPSVVQRARQMLERIEGGQPLAC.

Residues 1–67 (MAPGEQQLSL…SNNDDEGLPR (67 aa)) form a disordered region. Over residues 26-36 (SEDKTEESERP) the composition is skewed to basic and acidic residues. Residue 691-698 (GPNASGKS) participates in ATP binding.

The protein belongs to the DNA mismatch repair MutS family.

This protein is involved in the repair of mismatches in DNA. It is possible that it carries out the mismatch recognition step. This protein has a weak ATPase activity. This is DNA mismatch repair protein MutS from Synechococcus sp. (strain RCC307).